We begin with the raw amino-acid sequence, 426 residues long: Metacaspase-1B (426 aa).

Residues 1 to 14 (MSGYPGAGYNGGGY) are compositionally biased toward gly residues. The segment at 1–111 (MSGYPGAGYN…QAPPPPPQAP (111 aa)) is disordered. A compositionally biased stretch (low complexity) spans 21 to 68 (QYGGYYPPQPAYNAYQQPPPQQQQYMVYHQPSPGPQQHQHWNPQQQTP). Catalysis depends on residues His-217 and Cys-273.

This sequence belongs to the peptidase C14B family.

In terms of biological role, involved in cell death (apoptosis). This is Metacaspase-1B (casB) from Neurospora crassa (strain ATCC 24698 / 74-OR23-1A / CBS 708.71 / DSM 1257 / FGSC 987).